A 67-amino-acid polypeptide reads, in one-letter code: Large ribosomal subunit protein bL35 (67 aa).

Belongs to the bacterial ribosomal protein bL35 family.

The polypeptide is Large ribosomal subunit protein bL35 (Rhizobium johnstonii (strain DSM 114642 / LMG 32736 / 3841) (Rhizobium leguminosarum bv. viciae)).